Consider the following 443-residue polypeptide: Aklavinone 7-beta-L-rhodosaminyltransferase (443 aa).

The signal sequence occupies residues 1–23 (MRVLLTSFALDAHFNGSVPLAWA).

This sequence belongs to the glycosyltransferase 28 family.

The enzyme catalyses dTDP-beta-L-rhodosamine + aklavinone = aclacinomycin T + dTDP + 2 H(+). The activity of AknS is substantially increased by the addition of the accessory protein AknT. Functionally, involved in the biosynthesis of the anthracycline antitumor agent aclacinomycin A. Catalyzes the transfer of the proximal deoxyhexose, L-rhodosamine, from dTDP-beta-L-rhodosamine to the C7-OH of aklavinone aglycone to yield aclacinomycin T (rhodosaminyl-aklavinone). It can also use dTDP-2-deoxy-beta-L-fucose, TDP-2-deoxyfucose, dTDP-4-amino-2-deoxyrhamnose, TDP-L-rhodosamine as sugar donor and epsilon-rhodomycinone as sugar acceptor. The chain is Aklavinone 7-beta-L-rhodosaminyltransferase from Streptomyces galilaeus.